Consider the following 822-residue polypeptide: A disintegrin and metallopeptidase domain 3 (822 aa).

Residues 1–16 (MLPLFLVLSYLGQVIA) form the signal peptide. The region spanning 187 to 384 (RILRIKIIMD…PELDCLRNTS (198 aa)) is the Peptidase M12B domain. 7 cysteine pairs are disulfide-bonded: cysteine 296/cysteine 379, cysteine 338/cysteine 363, cysteine 340/cysteine 345, cysteine 456/cysteine 476, cysteine 623/cysteine 635, cysteine 629/cysteine 641, and cysteine 643/cysteine 652. In terms of domain architecture, Disintegrin spans 395–484 (GSYCGNHLLE…GCAPDTKAAD (90 aa)). An EGF-like domain is found at 619–653 (GTRECEADDKCQGHGICNNLNNCQCESGFAPPECD). The chain crosses the membrane as a helical span at residues 689–709 (VLLISFYILLPFLVVLAFMAV).

In terms of assembly, interacts with LY6K. Interacts with TEX101. Post-translationally, initially synthesized as a 110-kDa precursor in round spermatids, and the precursor is then processed into a 42-kDa mature protein during the sperm transport into and/or once in the epididymis. In terms of tissue distribution, expressed in sperm (at protein level).

It localises to the cell membrane. In terms of biological role, involved in fertilization by controlling sperm migration into the oviduct. Promotes the binding of sperm to the oocyte zona pellucida. This Mus musculus (Mouse) protein is A disintegrin and metallopeptidase domain 3.